The sequence spans 1140 residues: Rho GTPase-activating protein gacF (1140 aa).

8 disordered regions span residues 1 to 145 (MKTH…KPSR), 189 to 236 (ESDI…IEPI), 455 to 504 (INNN…STSF), 520 to 644 (EVQQ…GLES), 661 to 700 (ESSK…DEDE), 720 to 759 (ETND…NNIS), 773 to 927 (AKVT…STLS), and 952 to 1095 (TSSP…NHTN). Composition is skewed to low complexity over residues 10-26 (LGGL…LKSF) and 35-71 (QQQQ…ASSS). Residues 28 to 55 (TEEVIHEQQQQQQQHNNNNNNNNNHQRQ) adopt a coiled-coil conformation. Positions 72 to 82 (IEETSGYLSKT) are enriched in polar residues. 2 stretches are compositionally biased toward low complexity: residues 83–136 (SSSS…TSSP) and 193–222 (DNGS…SSSS). A Rho-GAP domain is found at 234–409 (EPISQSTEDY…RLIENYHSIF (176 aa)). Composition is skewed to low complexity over residues 456–475 (NNNS…SPYK) and 482–493 (PKSSPKLNNRNS). Positions 494–504 (ISPKLSSSTSF) are enriched in polar residues. Positions 517 to 548 (ISDEVQQEQQNQQQQQDEQQDEQQDEQQDEQQ) form a coiled coil. The span at 520–533 (EVQQEQQNQQQQQD) shows a compositional bias: low complexity. The span at 534 to 549 (EQQDEQQDEQQDEQQD) shows a compositional bias: acidic residues. Residues 550-566 (EQNSNSTSINTSSSSIT) are compositionally biased toward low complexity. Residues 572–596 (STVQYLNRINTCRRPSSWTNNNRIK) are compositionally biased toward polar residues. The span at 597 to 606 (QQQHHHHHHQ) shows a compositional bias: basic residues. The segment covering 607–631 (QQQQHQQHQQQQSSSSESNSSLTSS) has biased composition (low complexity). Polar residues-rich tracts occupy residues 632–641 (PQKRLNSVNG) and 672–684 (NRQM…NNIG). A compositionally biased stretch (low complexity) spans 724–759 (DNNNNDQINNSNSSNNIPKTTITTTTNNTTTTNNIS). The segment covering 773 to 796 (AKVTPTPTPAPMQTSSFLSTKQTN) has biased composition (polar residues). Low complexity predominate over residues 797 to 822 (SPSSSSSPSSTVSSTSSSPSSSLSSS). The segment covering 823 to 854 (IDNKTMSNVNYNRFQPANRTVSSPNVRNFSVP) has biased composition (polar residues). Composition is skewed to low complexity over residues 891 to 914 (KPKN…NSTP), 952 to 1058 (TSSP…TSST), and 1065 to 1079 (HSNS…SSSS).

Its subcellular location is the cytoplasm. In terms of biological role, rho GTPase-activating protein involved in the signal transduction pathway. The polypeptide is Rho GTPase-activating protein gacF (gacF) (Dictyostelium discoideum (Social amoeba)).